A 787-amino-acid polypeptide reads, in one-letter code: MASFIDLFAGDITTQLLKLLALVANTVYSCKGIAERLITMIRDVQPTIREIQYSGAELSNHHQTQLGVFYEILEKARKLCEKVLRCNRWNLKHVYHANKMKDLEKQISRFLNSQILLFVLAEVCHLRVNGDRIERNMDRLLTERNDSLSFPETMMEIETVSDPEIQTVLELGKKKVKEMMFKFTDTHLFGISGMSGSGKTTLAIELSKDDDVRGLFKNKVLFLTVSRSPNFENLESCIREFLYDGVHQRKLVILDDVWTRESLDRLMSKIRGSTTLVVSRSKLADPRTTYNVELLKKDEAMSLLCLCAFEQKSPPSPFNKYLVKQVVDECKGLPLSLKVLGASLKNKPERYWEGVVKRLLRGEAADETHESRVFAHMEESLENLDPKIRDCFLDMGAFPEDKKIPLDLLTSVWVERHDIDEETAFSFVLRLADKNLLTIVNNPRFGDVHIGYYDVFVTQHDVLRDLALHMSNRVDVNRRERLLMPKTEPVLPREWEKNKDEPFDAKIVSLHTGEMDEMNWFDMDLPKAEVLILNFSSDNYVLPPFIGKMSRLRVLVIINNGMSPARLHGFSIFANLAKLRSLWLKRVHVPELTSCTIPLKNLHKIHLIFCKVKNSFVQTSFDISKIFPSLSDLTIDHCDDLLELKSIFGITSLNSLSITNCPRILELPKNLSNVQSLERLRLYACPELISLPVEVCELPCLKYVDISQCVSLVSLPEKFGKLGSLEKIDMRECSLLGLPSSVAALVSLRHVICDEETSSMWEMVKKVVPELCIEVAKKCFTVDWLDD.

The RPW8 domain occupies 1–149; sequence MASFIDLFAG…LLTERNDSLS (149 aa). Residues 96 to 112 adopt a coiled-coil conformation; it reads HANKMKDLEKQISRFLN. Residue 193–200 participates in ATP binding; the sequence is GMSGSGKT. The 168-residue stretch at 247-414 folds into the NB-ARC domain; that stretch reads HQRKLVILDD…PLDLLTSVWV (168 aa). LRR repeat units follow at residues 549–575, 576–599, 650–674, and 722–745; these read MSRLRVLVIINNGMSPARLHGFSIFAN, LAKLRSLWLKRVHVPELTSCTIPL, ITSLNSLSITNCPRILELPKNLSNV, and LGSLEKIDMRECSLLGLPSSVAAL.

It belongs to the disease resistance NB-LRR family.

Its function is as follows. Disease resistance (R) protein that mediates resistance against Hyaloperonospora parasitica in a salicylic acid-dependent manner. Also mediates resistance against Erysiphe cichoracearum is both salicylic acid-dependent and partially NPR1-dependent. Resistance proteins guard the plant against pathogens that contain an appropriate avirulence protein via an indirect interaction with this avirulence protein. That triggers a defense system including the hypersensitive response, which restricts the pathogen growth. This Arabidopsis thaliana (Mouse-ear cress) protein is Disease resistance protein ADR1 (ADR1).